A 151-amino-acid polypeptide reads, in one-letter code: Ribonuclease P protein component (151 aa).

The tract at residues 1–62 is disordered; the sequence is MDEKDLATQP…LKGDSAFRRL (62 aa). Residues 28-48 show a composition bias toward low complexity; that stretch reads GAQGAEAQAAEGPLAAHAQGA.

Belongs to the RnpA family. Consists of a catalytic RNA component (M1 or rnpB) and a protein subunit.

It carries out the reaction Endonucleolytic cleavage of RNA, removing 5'-extranucleotides from tRNA precursor.. Functionally, RNaseP catalyzes the removal of the 5'-leader sequence from pre-tRNA to produce the mature 5'-terminus. It can also cleave other RNA substrates such as 4.5S RNA. The protein component plays an auxiliary but essential role in vivo by binding to the 5'-leader sequence and broadening the substrate specificity of the ribozyme. The polypeptide is Ribonuclease P protein component (Thermus oshimai).